The chain runs to 393 residues: Methylthioribose kinase (393 aa).

ATP contacts are provided by residues Asn-38, Lys-53, and Glu-107–Leu-109. Residue Asp-225 coordinates substrate. Asp-242 to Glu-244 is an ATP binding site. Arg-332 is a substrate binding site.

This sequence belongs to the methylthioribose kinase family. As to quaternary structure, homodimer.

It catalyses the reaction 5-(methylsulfanyl)-D-ribose + ATP = 5-(methylsulfanyl)-alpha-D-ribose 1-phosphate + ADP + H(+). Its pathway is amino-acid biosynthesis; L-methionine biosynthesis via salvage pathway; S-methyl-5-thio-alpha-D-ribose 1-phosphate from S-methyl-5'-thioadenosine (hydrolase route): step 2/2. Its function is as follows. Catalyzes the phosphorylation of methylthioribose into methylthioribose-1-phosphate. The protein is Methylthioribose kinase of Bacillus cereus (strain B4264).